Reading from the N-terminus, the 428-residue chain is Probable 4-methylmuconolactone transporter (428 aa).

Topologically, residues 1 to 26 (MFAWYKAGSPQQKKTFWACYSGWALD) are cytoplasmic. Residues 27–47 (SFDMQMFSFLLPALTLTWGLT) form a helical membrane-spanning segment. At 48 to 50 (KAE) the chain is on the periplasmic side. Residues 51–71 (VGVLGTVALVVTAIGGWGAGI) form a helical membrane-spanning segment. At 72–80 (LSDRYGRAR) the chain is on the cytoplasmic side. A helical membrane pass occupies residues 81-101 (ILVLAIIWFTLFGVLAGFAQS). Over 102 to 110 (YQQLLIART) the chain is Periplasmic. A helical transmembrane segment spans residues 111–131 (LQGLGFGGEWAVGAALMAEVI). At 132–145 (DSRHRGKAIGFVQS) the chain is on the cytoplasmic side. Residues 146 to 166 (GFALGWALAVVVATLLLAWLP) traverse the membrane as a helical segment. A topological domain (periplasmic) is located at residue K167. A helical membrane pass occupies residues 168–188 (EMAWRVAFWSGIIPALIVLFI). Residues 189 to 227 (RRHVKDSSMFERARQSRAPRASLSSVFNRKYARTLALSS) are Cytoplasmic-facing. A helical transmembrane segment spans residues 228–248 (VLVIGLQAGCYAILVWLPSLL). At 249-252 (NQRQ) the chain is on the periplasmic side. Residues 253 to 273 (VAAGSMIVTVFIMAFGSFCGF) form a helical membrane-spanning segment. Residues 274–287 (AVTADLSDRIGRRP) are Cytoplasmic-facing. Residues 288–308 (TLILLSVCAWIVTVSYMLLPL) traverse the membrane as a helical segment. The Periplasmic portion of the chain corresponds to 309-314 (NTTLTA). A helical transmembrane segment spans residues 315 to 335 (ILGFLVGFSAIGMFAALGPFL). The Cytoplasmic portion of the chain corresponds to 336 to 356 (SELFPTNVRTTCMGFAYNVGK). Residues 357-371 (SIGAGSVVGVGVLST) traverse the membrane as a helical segment. The Periplasmic segment spans residues 372–377 (HIGLAN). Residues 378–398 (AMGTFCLVAYAFAVFGIMLLP) form a helical membrane-spanning segment. At 399 to 428 (ETRGIAIENIGEADAHSPAAPLAQPASARS) the chain is on the cytoplasmic side.

Belongs to the major facilitator superfamily. Sugar transporter (TC 2.A.1.1) family.

The protein localises to the cell inner membrane. Probable uptake of 4-methylmuconolactone. The chain is Probable 4-methylmuconolactone transporter from Cupriavidus pinatubonensis (strain JMP 134 / LMG 1197) (Cupriavidus necator (strain JMP 134)).